We begin with the raw amino-acid sequence, 230 residues long: MGQKVHPNGIRLGITKAFSSTWYAGKKDFAANLFSDFEIRKFLTEKLKNASLSKITIERPAKSVRVTIHTARPGVVIGKKGEDVEKLRTAIAKMAGVPAQINISEVRKPELDAKLVADSISSQLERRVMFRRAMKRAVQNAMRLGAKGIKVQVGGRLGGAEIARSEWYREGRVPLHTLRADIDYSTSEAHTVYGIIGVKVWIFKGEVLGGLPLQVEEQQPSKPKRKSRGK.

A KH type-2 domain is found at 39–107 (IRKFLTEKLK…PAQINISEVR (69 aa)).

It belongs to the universal ribosomal protein uS3 family. Part of the 30S ribosomal subunit. Forms a tight complex with proteins S10 and S14.

Functionally, binds the lower part of the 30S subunit head. Binds mRNA in the 70S ribosome, positioning it for translation. The polypeptide is Small ribosomal subunit protein uS3 (Psychromonas ingrahamii (strain DSM 17664 / CCUG 51855 / 37)).